The following is a 91-amino-acid chain: Acylphosphatase (91 aa).

Residues 3–90 (RVLIRVKGKV…EIYLDFSITQ (88 aa)) form the Acylphosphatase-like domain. Active-site residues include Arg-18 and Asn-36.

Belongs to the acylphosphatase family.

It catalyses the reaction an acyl phosphate + H2O = a carboxylate + phosphate + H(+). This chain is Acylphosphatase (acyP), found in Shewanella amazonensis (strain ATCC BAA-1098 / SB2B).